We begin with the raw amino-acid sequence, 519 residues long: Xylose import ATP-binding protein XylG (519 aa).

ABC transporter domains lie at 6–245 (LTMR…VGRE) and 262–507 (LEAR…LTPA). ATP is bound at residue 38–45 (GENGAGKS).

This sequence belongs to the ABC transporter superfamily. Xylose importer (TC 3.A.1.2.4) family. As to quaternary structure, the complex is composed of two ATP-binding proteins (XylG), two transmembrane proteins (XylH) and a solute-binding protein (XylF).

It localises to the cell inner membrane. The catalysed reaction is D-xylose(out) + ATP + H2O = D-xylose(in) + ADP + phosphate + H(+). Part of the ABC transporter complex XylFGH involved in xylose import. Responsible for energy coupling to the transport system. The sequence is that of Xylose import ATP-binding protein XylG from Burkholderia ambifaria (strain ATCC BAA-244 / DSM 16087 / CCUG 44356 / LMG 19182 / AMMD) (Burkholderia cepacia (strain AMMD)).